The following is a 310-amino-acid chain: Cytosolic Fe-S cluster assembly factor Nubp1 homolog (310 aa).

Positions 8, 22, 25, and 31 each coordinate [4Fe-4S] cluster. Residue 62–69 (GKGGVGKS) coordinates ATP. The [4Fe-4S] cluster site is built by cysteine 239 and cysteine 242.

The protein belongs to the Mrp/NBP35 ATP-binding proteins family. NUBP1/NBP35 subfamily. As to quaternary structure, heterotetramer of 2 Nubp1 and 2 Nubp2 chains. [4Fe-4S] cluster is required as a cofactor.

The protein localises to the cytoplasm. Its function is as follows. Component of the cytosolic iron-sulfur (Fe/S) protein assembly (CIA) machinery. Required for maturation of extramitochondrial Fe-S proteins. The Nubp1-Nubp2 heterotetramer forms a Fe-S scaffold complex, mediating the de novo assembly of an Fe-S cluster and its transfer to target apoproteins. The polypeptide is Cytosolic Fe-S cluster assembly factor Nubp1 homolog (Drosophila ananassae (Fruit fly)).